Reading from the N-terminus, the 201-residue chain is Ras-related protein Ral-a (201 aa).

18-25 is a GTP binding site; that stretch reads GSGGVGKS. The Effector region signature appears at 40-48; it reads YEPTKADSY. GTP is bound by residues 65–69 and 124–127; these read DTAGQ and NKCD. A Cysteine methyl ester modification is found at C198. C198 is lipidated: S-geranylgeranyl cysteine. Residues 199–201 constitute a propeptide, removed in mature form; that stretch reads TLL.

Belongs to the small GTPase superfamily. Ras family.

The protein resides in the cell membrane. Its subcellular location is the cleavage furrow. It is found in the midbody. The protein localises to the midbody ring. It carries out the reaction GTP + H2O = GDP + phosphate + H(+). The chain is Ras-related protein Ral-a (Rala) from Drosophila melanogaster (Fruit fly).